Reading from the N-terminus, the 210-residue chain is Potassium-transporting ATPase KdpC subunit (210 aa).

Residues 13–33 form a helical membrane-spanning segment; that stretch reads LVTLVLLLVCGLAYPLILTGI.

It belongs to the KdpC family. In terms of assembly, the system is composed of three essential subunits: KdpA, KdpB and KdpC.

The protein localises to the cell membrane. Part of the high-affinity ATP-driven potassium transport (or Kdp) system, which catalyzes the hydrolysis of ATP coupled with the electrogenic transport of potassium into the cytoplasm. This subunit acts as a catalytic chaperone that increases the ATP-binding affinity of the ATP-hydrolyzing subunit KdpB by the formation of a transient KdpB/KdpC/ATP ternary complex. The polypeptide is Potassium-transporting ATPase KdpC subunit (Clostridium kluyveri (strain ATCC 8527 / DSM 555 / NBRC 12016 / NCIMB 10680 / K1)).